Consider the following 554-residue polypeptide: MKRKYPYSLAKGLTSTQIAVIVAVIVIVIIIGVVAGFVLTKGPSTTAVTTTVTSTFTTTTTIPSTTTSTPSNTVVFYTWWGGGDGGEALSQIIPAVKQYAGLQMQTYSIPGAGGTNAKYAILALIQAGKPPAAFQVHYGPEMISYVEAAPNGIHTFVNMTPYLIQWGLLNNAVYAVLQAGAYNGTLLSVPINVHRGAVLYVNTQLLREYNLPFPYNFSTLVYDTVQLANHGVSPWIIPGGDGGWDQFNVWEDIFLYLAGPQLYNELIYGTLNFSNPTVQKLINETNYWFLNFTSYNYPGWQSMSWEQAFALIAQGKVAFQANGNWVTNYASYINVTVYPPLPQYISNSSVSVVETPFPGTQHYYALVIDTIGIPVGPQEQQALQLAHFWSSYQGQEVWTKYKAVTYYKNGTDWYAQPAQWYDYQQLINTSEQNFVYQLSDGGVFDDVFAQIDSGLLTLQQVGKVGLSAWNSTLVSSMQQEQNEWLAAAKLGLGYLGFPGHPFAGYYPPWVTNPSAYGLTNNTQKTSNSVMLFLLPFLALPLAIASIDNKYYLLK.

The Cytoplasmic portion of the chain corresponds to Met-1–Gln-17. Residues Ile-18–Val-38 traverse the membrane as a helical segment. The Extracellular portion of the chain corresponds to Leu-39–Thr-525. A helical membrane pass occupies residues Ser-526 to Ile-546. Over Asp-547–Lys-554 the chain is Cytoplasmic.

The protein belongs to the bacterial solute-binding protein 1 family. In terms of assembly, the complex is composed of two ATP-binding proteins (GlcV), two transmembrane proteins (GlcT and GlcU) and a solute-binding protein (GlcS).

It localises to the cell membrane. With respect to regulation, binding of glucose is strongly inhibited by galactose and mannose. In terms of biological role, part of the ABC transporter complex GlcSTUV involved in glucose uptake. Binds glucose. Can also bind galactose and mannose. This Saccharolobus solfataricus (strain ATCC 35092 / DSM 1617 / JCM 11322 / P2) (Sulfolobus solfataricus) protein is Glucose-binding protein GlcS.